The following is a 173-amino-acid chain: Xanthine-guanine phosphoribosyltransferase (173 aa).

Residues 48 to 49 (RG) and 107 to 115 (DDLVDTGKT) contribute to the 5-phospho-alpha-D-ribose 1-diphosphate site. Aspartate 108 lines the Mg(2+) pocket. Guanine-binding residues include aspartate 111 and isoleucine 154. The xanthine site is built by aspartate 111 and isoleucine 154. GMP-binding positions include 111-115 (DTGKT) and 153-154 (WI).

The protein belongs to the purine/pyrimidine phosphoribosyltransferase family. XGPT subfamily. Homotetramer. Requires Mg(2+) as cofactor.

Its subcellular location is the cell inner membrane. It carries out the reaction GMP + diphosphate = guanine + 5-phospho-alpha-D-ribose 1-diphosphate. The catalysed reaction is XMP + diphosphate = xanthine + 5-phospho-alpha-D-ribose 1-diphosphate. The enzyme catalyses IMP + diphosphate = hypoxanthine + 5-phospho-alpha-D-ribose 1-diphosphate. It functions in the pathway purine metabolism; GMP biosynthesis via salvage pathway; GMP from guanine: step 1/1. Its pathway is purine metabolism; XMP biosynthesis via salvage pathway; XMP from xanthine: step 1/1. Purine salvage pathway enzyme that catalyzes the transfer of the ribosyl-5-phosphate group from 5-phospho-alpha-D-ribose 1-diphosphate (PRPP) to the N9 position of the 6-oxopurines guanine and xanthine to form the corresponding ribonucleotides GMP (guanosine 5'-monophosphate) and XMP (xanthosine 5'-monophosphate), with the release of PPi. To a lesser extent, also acts on hypoxanthine. In Rhodopseudomonas palustris (strain ATCC BAA-98 / CGA009), this protein is Xanthine-guanine phosphoribosyltransferase.